The primary structure comprises 1001 residues: Translation initiation factor IF-2 (1001 aa).

The segment at 34-404 (KSHSSTISES…SRGDRRDRKE (371 aa)) is disordered. Basic and acidic residues predominate over residues 67–80 (SRPESKEDKSDPKQ). Pro residues-rich tracts occupy residues 98-107 (PARPTPPPRP), 147-157 (PTQPLAPPPVP), and 163-172 (PSKPAPPTPP). Positions 173–190 (AKKAAPAPRLAGPPGRTA) are enriched in low complexity. Composition is skewed to basic and acidic residues over residues 212–230 (SLKD…EEKV) and 238–252 (PKPK…PPRP). Acidic residues predominate over residues 332–342 (DDDDDDLDIDG). Low complexity-rich tracts occupy residues 362 to 371 (KSLAAKPSTP) and 385 to 394 (AGSSAGGSSR). Positions 395-404 (SRGDRRDRKE) are enriched in basic and acidic residues. The 174-residue stretch at 493–666 (RRPPVVTIMG…LLVSEVEELV (174 aa)) folds into the tr-type G domain. Residues 502–509 (GHVDHGKT) are G1. GTP is bound at residue 502–509 (GHVDHGKT). The G2 stretch occupies residues 527–531 (GITQH). The interval 552-555 (DTPG) is G3. Residues 552–556 (DTPGH) and 606–609 (NKVD) contribute to the GTP site. The tract at residues 606 to 609 (NKVD) is G4. The interval 642–644 (SAL) is G5.

This sequence belongs to the TRAFAC class translation factor GTPase superfamily. Classic translation factor GTPase family. IF-2 subfamily.

It localises to the cytoplasm. In terms of biological role, one of the essential components for the initiation of protein synthesis. Protects formylmethionyl-tRNA from spontaneous hydrolysis and promotes its binding to the 30S ribosomal subunits. Also involved in the hydrolysis of GTP during the formation of the 70S ribosomal complex. The sequence is that of Translation initiation factor IF-2 (infB) from Synechocystis sp. (strain ATCC 27184 / PCC 6803 / Kazusa).